Reading from the N-terminus, the 372-residue chain is Glutamate 5-kinase (372 aa).

Residue Lys-6 participates in ATP binding. 3 residues coordinate substrate: Ser-46, Asp-133, and Asn-145. Residues 165–166 (TD) and 207–213 (TGGMYTK) contribute to the ATP site. The PUA domain maps to 272–350 (NGFLFVDEGA…HDIESILGYK (79 aa)).

Belongs to the glutamate 5-kinase family.

The protein resides in the cytoplasm. It carries out the reaction L-glutamate + ATP = L-glutamyl 5-phosphate + ADP. It functions in the pathway amino-acid biosynthesis; L-proline biosynthesis; L-glutamate 5-semialdehyde from L-glutamate: step 1/2. Functionally, catalyzes the transfer of a phosphate group to glutamate to form L-glutamate 5-phosphate. In Caldanaerobacter subterraneus subsp. tengcongensis (strain DSM 15242 / JCM 11007 / NBRC 100824 / MB4) (Thermoanaerobacter tengcongensis), this protein is Glutamate 5-kinase.